Here is a 405-residue protein sequence, read N- to C-terminus: tRNA-specific 2-thiouridylase MnmA (405 aa).

ATP is bound by residues 41–48 (AMSGGVDS) and L67. C135 acts as the Nucleophile in catalysis. A disulfide bond links C135 and C231. G159 lines the ATP pocket. Residues 181 to 183 (KDQ) are interaction with tRNA. Residue C231 is the Cysteine persulfide intermediate of the active site.

The protein belongs to the MnmA/TRMU family.

The protein localises to the cytoplasm. The catalysed reaction is S-sulfanyl-L-cysteinyl-[protein] + uridine(34) in tRNA + AH2 + ATP = 2-thiouridine(34) in tRNA + L-cysteinyl-[protein] + A + AMP + diphosphate + H(+). Its function is as follows. Catalyzes the 2-thiolation of uridine at the wobble position (U34) of tRNA, leading to the formation of s(2)U34. This chain is tRNA-specific 2-thiouridylase MnmA, found in Maricaulis maris (strain MCS10) (Caulobacter maris).